The following is a 362-amino-acid chain: E3 ubiquitin-protein ligase rififylin (362 aa).

Residues 17–37 (ETPPPQGARTQAYSNPGYSSF) form a disordered region. A compositionally biased stretch (polar residues) spans 24-37 (ARTQAYSNPGYSSF). The FYVE-type zinc-finger motif lies at 41–93 (TGSEPSCKACGVHFASTTRKQTCLDCKKNFCMTCSSQEGNGPRLCLLCLRFRA). The SAP 1 domain maps to 101–120 (LMKMKVKDLRDYLSLHDIST). The interval 162 to 183 (LTQPQSSTVPPTSPGLPSSPAQ) is disordered. Phosphoserine occurs at positions 225, 228, 231, and 239. Residues 249–263 (IEGLTVRQLKEILAR) form the SAP 2 domain. The RING-type zinc finger occupies 315–350 (CKICMDSPIDCVLLECGHMVTCTKCGKRMNECPICR).

In terms of assembly, interacts with CASP8 and CASP10. Interacts with RIPK1 (via protein kinase domain); involved in RIPK1 ubiquitination. Interacts with PRR5L. Interacts (via RING-type zinc finger) with p53/TP53; involved in p53/TP53 ubiquitination. Interacts (via RING-type zinc finger) with MDM2; the interaction stabilizes MDM2. Post-translationally, autoubiquitinated. In terms of processing, palmitoylated. Undergoes caspase-mediated cleavage upon death-receptor activation, by TNFSF10 for instance. May be mediated by the caspases CASP8 and CASP10 in a negative feedback loop. In terms of tissue distribution, ubiquitous. Detected in cerebrum, cerebellum, midbrain, brain stem, hippocampus, striatum, liver, heart, lung, kidney, muscle, spleen and testis.

It localises to the cytoplasm. Its subcellular location is the cytosol. It is found in the cell membrane. The protein localises to the recycling endosome membrane. The catalysed reaction is S-ubiquitinyl-[E2 ubiquitin-conjugating enzyme]-L-cysteine + [acceptor protein]-L-lysine = [E2 ubiquitin-conjugating enzyme]-L-cysteine + N(6)-ubiquitinyl-[acceptor protein]-L-lysine.. Its pathway is protein modification; protein ubiquitination. Its function is as follows. E3 ubiquitin-protein ligase that regulates several biological processes through the ubiquitin-mediated proteasomal degradation of various target proteins. Mediates 'Lys-48'-linked polyubiquitination of PRR5L and its subsequent proteasomal degradation thereby indirectly regulating cell migration through the mTORC2 complex. Also ubiquitinates the caspases CASP8 and CASP10, promoting their proteasomal degradation, to negatively regulate apoptosis downstream of death domain receptors. Also negatively regulates the tumor necrosis factor-mediated signaling pathway through targeting of RIPK1 to ubiquitin-mediated proteasomal degradation. Negatively regulates p53/TP53 through its direct ubiquitination and targeting to proteasomal degradation. Indirectly, may also negatively regulate p53/TP53 through ubiquitination and degradation of SFN. May also play a role in endocytic recycling. This is E3 ubiquitin-protein ligase rififylin from Rattus norvegicus (Rat).